The chain runs to 503 residues: Poxin-Schlafen (503 aa).

Residue His-15 is the Proton donor of the active site. Residue Tyr-136 is the Shared with catalytic histidine of dimeric partner of the active site. Lys-140 (proton acceptor; shared with catalytic histidine of dimeric partner) is an active-site residue.

The protein in the N-terminal section; belongs to the poxin family. In the C-terminal section; belongs to the Schlafen protein family. Subgroup poxviridae B3 subfamily. In terms of assembly, homodimer.

The enzyme catalyses 2',3'-cGAMP + H2O = Gp(2'-5')Ap(3') + H(+). Functionally, nuclease that is responsible for viral evasion of host cGAS-STING innate immunity. Cleaves 2',3'-cGAMP which is produced by host cGAS following recognition of cytosolic DNA and blocks the subsequent 2',3'-cGAMP-mediated activation of TMEM173/STING, which normally spreads to adjacent cells and activates the interferon and NF-kappa-B immune responses. The sequence is that of Poxin-Schlafen (OPG188) from Cynomys gunnisoni (Gunnison's prairie dog).